The following is a 423-amino-acid chain: Deferrochelatase (423 aa).

The tat-type signal signal peptide spans 1–35 (MQYKDENGVNEPSRRRLLKVIGALALAGSCPVAHA). Heme b-binding positions include 236–238 (GTA), His329, 334–336 (NPR), and Arg347.

Belongs to the DyP-type peroxidase family. EfeB subfamily. As to quaternary structure, homodimer. Part of a ferrous iron transporter composed of EfeU, EfeO and EfeB. It depends on heme b as a cofactor. Post-translationally, predicted to be exported by the Tat system. The position of the signal peptide cleavage has not been experimentally proven.

It localises to the periplasm. It carries out the reaction heme b + 2 H(+) = protoporphyrin IX + Fe(2+). Functionally, involved in the recovery of exogenous heme iron. Extracts iron from heme while preserving the protoporphyrin ring intact. The protein is Deferrochelatase (efeB) of Shigella boydii serotype 4 (strain Sb227).